Consider the following 377-residue polypeptide: DNA methyltransferase CcrM (377 aa).

The 103-residue stretch at Leu-271–Ala-373 folds into the RAMA domain.

This sequence belongs to the N(4)/N(6)-methyltransferase family.

It catalyses the reaction a 2'-deoxyadenosine in DNA + S-adenosyl-L-methionine = an N(6)-methyl-2'-deoxyadenosine in DNA + S-adenosyl-L-homocysteine + H(+). Its function is as follows. A beta subtype methylase that recognizes the double-stranded sequence 5'-GANTC-3' and methylates on A-2 on both strands. Overexpression from a moderate-copy number plasmid (10-12 copies/cell) leads to enlarged, branched cells, many with 3-5 genome equivalents. Contributes to the accurate cell-cycle control of DNA replication and cellular morphology. The chain is DNA methyltransferase CcrM from Brucella abortus (strain 2308).